A 463-amino-acid chain; its full sequence is Hexose-6-phosphate:phosphate antiporter (463 aa).

At 1-24 the chain is on the cytoplasmic side; it reads MLAFLNQVRKPTLDLPLDVRRKMW. The helical transmembrane segment at 25–45 threads the bilayer; it reads FKPFMQSYLVVFIGYLTMYLI. At 46–60 the chain is on the periplasmic side; it reads RKNFNIAQNDMISTY. A helical membrane pass occupies residues 61–81; that stretch reads GLSMTELGMIGLGFSITYGVG. Topologically, residues 82–96 are cytoplasmic; it reads KTLVSYYADGKNTKQ. The chain crosses the membrane as a helical span at residues 97-117; it reads FLPFMLILSAICMLGFSASMG. Over 118–122 the chain is Periplasmic; that stretch reads AGSTS. The helical transmembrane segment at 123-143 threads the bilayer; the sequence is LFLMIAFYALSGFFQSTGGSC. Residues 144 to 159 are Cytoplasmic-facing; the sequence is SYSTITKWTPRRKRGT. Residues 160-180 form a helical membrane-spanning segment; that stretch reads FLGFWNISHNLGGAGAAGVAL. At 181–189 the chain is on the periplasmic side; the sequence is FGANYLFDG. The helical transmembrane segment at 190-210 threads the bilayer; sequence HVIGMFIFPSIIALIVGFIGL. Residues 211-259 are Cytoplasmic-facing; the sequence is RFGSDSPESYGLGKAEELFGEEISEEDKETEENEMTKWQIFVEYVLKNK. The chain crosses the membrane as a helical span at residues 260 to 280; it reads VIWLLCFSNIFLYVVRIGIDQ. Topologically, residues 281–297 are periplasmic; the sequence is WSTVYAFQELKLSKEVA. The chain crosses the membrane as a helical span at residues 298–318; that stretch reads IQGFTLFEVGALVGTLLWGWL. The Cytoplasmic portion of the chain corresponds to 319-326; sequence SDLANGRR. A helical membrane pass occupies residues 327–347; sequence ALVACVALALIIATLGVYQHA. The Periplasmic segment spans residues 348–357; the sequence is SNQYVYLASL. The chain crosses the membrane as a helical span at residues 358 to 378; it reads FALGFLVFGPQLLIGVAAVGF. Over 379 to 382 the chain is Cytoplasmic; sequence VPKK. The helical transmembrane segment at 383 to 403 threads the bilayer; the sequence is AIGAADGIKGTFAYLIGDSFA. The Periplasmic segment spans residues 404–425; it reads KLGLGMIADGTPVFGLTGWAGT. Residues 426–446 form a helical membrane-spanning segment; that stretch reads FAALDAAAIGCICLMAMVAVM. Residues 447-463 are Cytoplasmic-facing; the sequence is EERKIRREKKIQQVNIA.

It belongs to the major facilitator superfamily. Organophosphate:Pi antiporter (OPA) (TC 2.A.1.4) family.

The protein resides in the cell inner membrane. In terms of biological role, mediates the exchange of external hexose 6-phosphate and internal inorganic phosphate. This chain is Hexose-6-phosphate:phosphate antiporter (uhpT), found in Salmonella typhimurium (strain LT2 / SGSC1412 / ATCC 700720).